Reading from the N-terminus, the 147-residue chain is Hemoglobin subunit gamma-1 (147 aa).

In terms of domain architecture, Globin spans 3-147; sequence NFTAEDKAAI…VASALGSRYH (145 aa). T13 bears the Phosphothreonine mark. 3 positions are modified to phosphoserine: S45, S51, and S53. Residue K60 is modified to N6-acetyllysine. A heme b-binding site is contributed by H64. An N6-acetyllysine modification is found at K83. Position 93 (H93) interacts with heme b. C94 bears the S-nitrosocysteine mark. S140 carries the post-translational modification Phosphoserine.

This sequence belongs to the globin family. As to quaternary structure, heterotetramer of two alpha chains and two gamma chains in fetal hemoglobin (Hb F). Red blood cells.

Its function is as follows. Gamma chains make up the fetal hemoglobin F, in combination with alpha chains. The polypeptide is Hemoglobin subunit gamma-1 (HBG1) (Sapajus apella (Brown-capped capuchin)).